The primary structure comprises 1407 residues: MKDLLKFLKAQTKTEEFDAIKIALASPDMIRSWSFGEVKKPETINYRTFKPERDGLFCARIFGPVKDYECLCGKYKRLKHRGVICEKCGVEVTQTKVRRERMGHIELASPTAHIWFLKSLPSRIGLLLDMPLRDIERVLYFESYVVIEGGMTNLERQQILTEEQYLDALEEFGDEFDAKMGAEAIQALLKSMDLEQECETLREELNETNSETKRKKLTKRIKLLEAFVQSGNKPEWMILTVLPVLPPDLRPLVPLDGGRFATSDLNDLYRRVINRNNRLKRLLDLAAPDIIVRNEKRMLQEAVDALLDNGRRGRAITGSNKRPLKSLADMIKGKQGRFRQNLLGKRVDYSGRSVITVGPYLRLHQCGLPKKMALELFKPFIYGKLELRGLATTIKAAKKMVEREEAVVWDILDEVIREHPVLLNRAPTLHRLGIQAFEPVLIEGKAIQLHPLVCAAYNADFDGDQMAVHVPLTLEAQLEARALMMSTNNILSPANGEPIIVPSQDVVLGLYYMTRDCVNAKGEGMVLTGPKEAERIYRAGLASLHARVKVRITEYEKDANGEFVAKTSLKDTTIGRAILWMIVPKGLPFSIVNQALGKKAISKMLNTCYRILGLKPTVIFADQTMYTGFAYAARSGASVGIDDMVIPEKKHEIISEAEAEVAEIQEQFQSGLVTAGERYNKVIDIWAAANDRVSKAMMDNLQTETVINRDGQEEQQVSFNSIYMMADSGARGSAAQIRQLAGMRGLMAKPDGSIIETPITANFREGLNVLQYFISTHGARKGLADTALKTANSGYLTRRLVDVAQDLVVTEDDCGTHEGILMTPVIEGGDVKEPLRDRVLGRVTAEDVLKPGTADILVPRNTLLHEQWCDLLEENSVDAVKVRSVVSCDTDFGVCAHCYGRDLARGHIINKGEAIGVIAAQSIGEPGTQLTMRTFHIGGAASRAAAESSIQVKNKGSIRLSNAKSVVNSSGKLVITSRNTELKLIDEFGRTKESYKVPYGSVMAKGDGEQVAGGETVANWDPHTMPVITEVSGFVRFTDMIDGQTITRQTDELTGLSSLVVLDSAERTTGGKDLRPALKIVDAQGNDVLIPGTDMPAQYFLPGKAIVQLEDGVQISSGDTLARVPQESGGTKDITGGLPRVADLFEARRPKEPAILAEISGIISFGKETKGKRRLVITPVDGSEPYEEMIPKWRQLNVFEGERVERGDVVSDGPEAPHDILRLRGVHAVTRYIVNEVQDVYRLQGVKINDKHIEVIVRQMLRKATIENAGSSDFLEGEQVEYSRVKIANRDLEANGKVGATFSRDLLGITKASLATESFISAASFQETTRVLTEAAVAGKRDELRGLKENVIVGRLIPAGTGYAYHQDRMRRRAAGELPAAPQVTAEDASASLAELLNAGLGGSDND.

Zn(2+) is bound by residues cysteine 70, cysteine 72, cysteine 85, and cysteine 88. Residues aspartate 460, aspartate 462, and aspartate 464 each contribute to the Mg(2+) site. Residues cysteine 814, cysteine 888, cysteine 895, and cysteine 898 each contribute to the Zn(2+) site.

This sequence belongs to the RNA polymerase beta' chain family. As to quaternary structure, the RNAP catalytic core consists of 2 alpha, 1 beta, 1 beta' and 1 omega subunit. When a sigma factor is associated with the core the holoenzyme is formed, which can initiate transcription. It depends on Mg(2+) as a cofactor. Requires Zn(2+) as cofactor.

The enzyme catalyses RNA(n) + a ribonucleoside 5'-triphosphate = RNA(n+1) + diphosphate. In terms of biological role, DNA-dependent RNA polymerase catalyzes the transcription of DNA into RNA using the four ribonucleoside triphosphates as substrates. This Citrobacter koseri (strain ATCC BAA-895 / CDC 4225-83 / SGSC4696) protein is DNA-directed RNA polymerase subunit beta'.